We begin with the raw amino-acid sequence, 190 residues long: Cytidylate kinase (190 aa).

7 to 15 lines the ATP pocket; it reads GKIGSGKST.

Belongs to the cytidylate kinase family. Type 2 subfamily.

The protein localises to the cytoplasm. The catalysed reaction is CMP + ATP = CDP + ADP. The enzyme catalyses dCMP + ATP = dCDP + ADP. The sequence is that of Cytidylate kinase from Thermoplasma volcanium (strain ATCC 51530 / DSM 4299 / JCM 9571 / NBRC 15438 / GSS1).